The sequence spans 161 residues: MFATAEFWILACLVAFFAILGYFKVHRTLAATLDKRAADIAAELDEARRLREEAQQLLASYQRKQREAMKEAEDIVAQAKVEAEQLAKETRANMEIQVERRTKLAEDKIAQAETQALNDVRATAAEVAVGAARRVIAAKVDAGKDAEFVEKSISELTSKLH.

Residues 1–21 (MFATAEFWILACLVAFFAILG) traverse the membrane as a helical segment.

This sequence belongs to the ATPase B chain family. As to quaternary structure, F-type ATPases have 2 components, F(1) - the catalytic core - and F(0) - the membrane proton channel. F(1) has five subunits: alpha(3), beta(3), gamma(1), delta(1), epsilon(1). F(0) has three main subunits: a(1), b(2) and c(10-14). The alpha and beta chains form an alternating ring which encloses part of the gamma chain. F(1) is attached to F(0) by a central stalk formed by the gamma and epsilon chains, while a peripheral stalk is formed by the delta and b chains.

Its subcellular location is the cell inner membrane. In terms of biological role, f(1)F(0) ATP synthase produces ATP from ADP in the presence of a proton or sodium gradient. F-type ATPases consist of two structural domains, F(1) containing the extramembraneous catalytic core and F(0) containing the membrane proton channel, linked together by a central stalk and a peripheral stalk. During catalysis, ATP synthesis in the catalytic domain of F(1) is coupled via a rotary mechanism of the central stalk subunits to proton translocation. Functionally, component of the F(0) channel, it forms part of the peripheral stalk, linking F(1) to F(0). This is ATP synthase subunit b 1 from Parvibaculum lavamentivorans (strain DS-1 / DSM 13023 / NCIMB 13966).